Reading from the N-terminus, the 91-residue chain is MSFLNGLFGRKRDSSAELAKQRLLTVLIDDRYKLTPEMMAQMKADLAEVLKRYLPAIDAEQIEVTLSRGEAHDLLKADVPLRRATDHPPNR.

The protein belongs to the MinE family.

Functionally, prevents the cell division inhibition by proteins MinC and MinD at internal division sites while permitting inhibition at polar sites. This ensures cell division at the proper site by restricting the formation of a division septum at the midpoint of the long axis of the cell. This chain is Cell division topological specificity factor, found in Chloroflexus aurantiacus (strain ATCC 29366 / DSM 635 / J-10-fl).